The sequence spans 721 residues: Phosphoribosylformylglycinamidine synthase subunit PurL (721 aa).

His-47 is an active-site residue. Positions 50 and 89 each coordinate ATP. Glu-91 lines the Mg(2+) pocket. Substrate-binding positions include 92-95 (SHNH) and Arg-114. Catalysis depends on His-93, which acts as the Proton acceptor. Asp-115 serves as a coordination point for Mg(2+). Gln-238 serves as a coordination point for substrate. Asp-266 is a Mg(2+) binding site. A substrate-binding site is contributed by 310–312 (ESQ). Asp-490 and Gly-527 together coordinate ATP. Position 528 (Asn-528) interacts with Mg(2+). Residue Ser-530 participates in substrate binding.

This sequence belongs to the FGAMS family. Monomer. Part of the FGAM synthase complex composed of 1 PurL, 1 PurQ and 2 PurS subunits.

The protein resides in the cytoplasm. The enzyme catalyses N(2)-formyl-N(1)-(5-phospho-beta-D-ribosyl)glycinamide + L-glutamine + ATP + H2O = 2-formamido-N(1)-(5-O-phospho-beta-D-ribosyl)acetamidine + L-glutamate + ADP + phosphate + H(+). It functions in the pathway purine metabolism; IMP biosynthesis via de novo pathway; 5-amino-1-(5-phospho-D-ribosyl)imidazole from N(2)-formyl-N(1)-(5-phospho-D-ribosyl)glycinamide: step 1/2. Part of the phosphoribosylformylglycinamidine synthase complex involved in the purines biosynthetic pathway. Catalyzes the ATP-dependent conversion of formylglycinamide ribonucleotide (FGAR) and glutamine to yield formylglycinamidine ribonucleotide (FGAM) and glutamate. The FGAM synthase complex is composed of three subunits. PurQ produces an ammonia molecule by converting glutamine to glutamate. PurL transfers the ammonia molecule to FGAR to form FGAM in an ATP-dependent manner. PurS interacts with PurQ and PurL and is thought to assist in the transfer of the ammonia molecule from PurQ to PurL. This is Phosphoribosylformylglycinamidine synthase subunit PurL from Ruegeria sp. (strain TM1040) (Silicibacter sp.).